Consider the following 246-residue polypeptide: NH(3)-dependent NAD(+) synthetase (246 aa).

An ATP-binding site is contributed by 29–36 (GLSGGIDS). Residue Asp-35 participates in Mg(2+) binding. Arg-110 contacts deamido-NAD(+). Position 130 (Thr-130) interacts with ATP. Glu-135 provides a ligand contact to Mg(2+). Lys-159 and Ser-181 together coordinate ATP.

This sequence belongs to the NAD synthetase family. As to quaternary structure, homodimer.

The enzyme catalyses deamido-NAD(+) + NH4(+) + ATP = AMP + diphosphate + NAD(+) + H(+). It participates in cofactor biosynthesis; NAD(+) biosynthesis; NAD(+) from deamido-NAD(+) (ammonia route): step 1/1. Catalyzes the ATP-dependent amidation of deamido-NAD to form NAD. Uses ammonia as a nitrogen source. The sequence is that of NH(3)-dependent NAD(+) synthetase from Campylobacter jejuni subsp. jejuni serotype O:6 (strain 81116 / NCTC 11828).